The sequence spans 354 residues: Uptake hydrogenase small subunit (354 aa).

The tat-type signal signal peptide spans 1–44; the sequence is MSQLETXYDVMRRQGITRRSFLKYCSLTGRPCLGPTFAPQIAHA. Positions 61, 64, 156, 190, 228, 231, 256, and 262 each coordinate [4Fe-4S] cluster. [3Fe-4S] cluster contacts are provided by Cys-271, Cys-290, and Cys-293.

Belongs to the [NiFe]/[NiFeSe] hydrogenase small subunit family. As to quaternary structure, heterodimer of a large and a small subunit. It depends on [4Fe-4S] cluster as a cofactor. [3Fe-4S] cluster is required as a cofactor. Post-translationally, predicted to be exported by the Tat system. The position of the signal peptide cleavage has not been experimentally proven.

It is found in the cell membrane. It catalyses the reaction H2 + A = AH2. In terms of biological role, this enzyme recycles the H(2) produced by nitrogenase to increase the production of ATP and to protect nitrogenase against inhibition or damage by O(2) under carbon- or phosphate-limited conditions. This chain is Uptake hydrogenase small subunit (hupA), found in Azotobacter chroococcum mcd 1.